The following is a 472-amino-acid chain: WASH complex subunit 1 (472 aa).

Positions 1–51 (MPQNRSVESQAYSLPLILPDLRREEAIHQITDTLQHLQTVSNDIFSRILQR) are required for WASH complex assembly. Disordered regions lie at residues 294–411 (DRQD…GGDL) and 429–472 (KVPA…DWES). Positions 301–334 (LPPPPPPPPPPPPPPPPEPSALSPPAPPPPPLSI) are enriched in pro residues. The interval 352–472 (QGAPKEVVNP…GDGDEDDWES (121 aa)) is VCA. The region spanning 364–386 (GRASLLESIRQAGGIGKANLRNV) is the WH2 domain. The span at 385–400 (NVKEKKLEKKKMKEQE) shows a compositional bias: basic and acidic residues.

This sequence belongs to the WASH1 family. As to quaternary structure, component of the WASH complex.

The protein localises to the early endosome membrane. Its subcellular location is the recycling endosome membrane. Functionally, acts as a nucleation-promoting factor at the surface of endosomes, where it recruits and activates the Arp2/3 complex to induce actin polymerization, playing a key role in the fission of tubules that serve as transport intermediates during endosome sorting. The polypeptide is WASH complex subunit 1 (Xenopus laevis (African clawed frog)).